Here is a 363-residue protein sequence, read N- to C-terminus: 3-dehydroquinate synthase (363 aa).

NAD(+) is bound by residues 134 to 135 (TT), Lys-147, and Lys-156. Zn(2+)-binding residues include Glu-189, His-254, and His-271.

It belongs to the sugar phosphate cyclases superfamily. Dehydroquinate synthase family. The cofactor is Co(2+). Zn(2+) serves as cofactor. NAD(+) is required as a cofactor.

Its subcellular location is the cytoplasm. It catalyses the reaction 7-phospho-2-dehydro-3-deoxy-D-arabino-heptonate = 3-dehydroquinate + phosphate. The protein operates within metabolic intermediate biosynthesis; chorismate biosynthesis; chorismate from D-erythrose 4-phosphate and phosphoenolpyruvate: step 2/7. Catalyzes the conversion of 3-deoxy-D-arabino-heptulosonate 7-phosphate (DAHP) to dehydroquinate (DHQ). This chain is 3-dehydroquinate synthase, found in Prochlorococcus marinus (strain MIT 9215).